The sequence spans 118 residues: Large ribosomal subunit protein bL19 (118 aa).

The protein belongs to the bacterial ribosomal protein bL19 family.

Functionally, this protein is located at the 30S-50S ribosomal subunit interface and may play a role in the structure and function of the aminoacyl-tRNA binding site. In Alcanivorax borkumensis (strain ATCC 700651 / DSM 11573 / NCIMB 13689 / SK2), this protein is Large ribosomal subunit protein bL19.